Consider the following 4730-residue polypeptide: Dynein heavy chain, cytoplasmic (4730 aa).

Disordered regions lie at residues Met1 to Pro23 and Thr91 to Ser120. The tract at residues Met1–Tyr1935 is stem. Residues Ser10–Pro23 are compositionally biased toward low complexity. A coiled-coil region spans residues Val867–Ser900. Residues Glu964–Ile1016 form a disordered region. The segment covering Ser969–Lys978 has biased composition (polar residues). Over residues Thr1002–Ile1016 the composition is skewed to low complexity. Coiled-coil stretches lie at residues Glu1204 to Ser1224, Ala1343 to Asp1372, Arg1425 to Leu1441, and Ala1661 to Arg1689. AAA stretches follow at residues Tyr1936–Ser2158, Lys2238–Leu2531, Glu2635–Ala2885, and Val2978–Gln3252. Residue Gly1974–Thr1981 participates in ATP binding. A coiled-coil region spans residues Ile2231–Gln2253. Gly2276–Thr2283 provides a ligand contact to ATP. The tract at residues Glu2437 to Ser2486 is disordered. The span at Pro2441–Glu2451 shows a compositional bias: basic and acidic residues. Positions Gln2442–Thr2462 form a coiled coil. Positions Gln2454–Ser2486 are enriched in low complexity. ATP is bound by residues Gly2674–Thr2681 and Gly3016–Ser3023. 3 coiled-coil regions span residues Ile3271–Asp3349, Ala3483–Met3585, and Thr3854–Glu3881. Positions Ile3271 to Met3585 are stalk. AAA regions lie at residues Leu3638–Leu3867 and Ser4098–Tyr4312. The tract at residues Lys4432–Lys4465 is disordered. Residues Ser4449–Lys4463 are compositionally biased toward basic and acidic residues.

It belongs to the dynein heavy chain family. Consists of at least two heavy chains and a number of intermediate and light chains.

The protein resides in the cytoplasm. The protein localises to the cytoskeleton. In terms of biological role, cytoplasmic dynein acts as a motor for the intracellular retrograde motility of vesicles and organelles along microtubules. Dynein has ATPase activity; the force-producing power stroke is thought to occur on release of ADP. In Dictyostelium discoideum (Social amoeba), this protein is Dynein heavy chain, cytoplasmic (dhcA).